We begin with the raw amino-acid sequence, 553 residues long: Putative transport protein YidE (553 aa).

The next 5 membrane-spanning stretches (helical) occupy residues 4–24 (IALT…IGNV), 28–48 (GVGL…HFVS), 65–85 (FGLI…FFAS), 95–115 (LFAV…HKLF), and 158–178 (MSYA…MWML). 2 consecutive RCK C-terminal domains span residues 191-276 (QQHE…VIGQ) and 279-361 (DTSL…VLGN). Transmembrane regions (helical) follow at residues 371–391 (MLPV…PVFV), 393–413 (GFPA…ALIL), 439–459 (IVLF…HTLV), 464–484 (LSWI…VGIL), 493–513 (YLTM…LAFA), and 533–553 (LVMF…WSIG).

Belongs to the AAE transporter (TC 2.A.81) family. YidE subfamily.

The protein localises to the cell membrane. The sequence is that of Putative transport protein YidE from Escherichia coli O6:K15:H31 (strain 536 / UPEC).